The primary structure comprises 577 residues: Dihydroxy-acid dehydratase (577 aa).

Basic and acidic residues predominate over residues 1-10 (MLKRSFDKSK). The segment at 1–22 (MLKRSFDKSKLPSRHVTEGPSR) is disordered. C56 serves as a coordination point for [2Fe-2S] cluster. Position 88 (D88) interacts with Mg(2+). C129 serves as a coordination point for [2Fe-2S] cluster. Mg(2+) contacts are provided by D130 and K131. An N6-carboxylysine modification is found at K131. Residue C201 participates in [2Fe-2S] cluster binding. E453 is a binding site for Mg(2+). S479 functions as the Proton acceptor in the catalytic mechanism.

The protein belongs to the IlvD/Edd family. As to quaternary structure, homodimer. [2Fe-2S] cluster serves as cofactor. The cofactor is Mg(2+).

The enzyme catalyses (2R)-2,3-dihydroxy-3-methylbutanoate = 3-methyl-2-oxobutanoate + H2O. The catalysed reaction is (2R,3R)-2,3-dihydroxy-3-methylpentanoate = (S)-3-methyl-2-oxopentanoate + H2O. It participates in amino-acid biosynthesis; L-isoleucine biosynthesis; L-isoleucine from 2-oxobutanoate: step 3/4. The protein operates within amino-acid biosynthesis; L-valine biosynthesis; L-valine from pyruvate: step 3/4. Its function is as follows. Functions in the biosynthesis of branched-chain amino acids. Catalyzes the dehydration of (2R,3R)-2,3-dihydroxy-3-methylpentanoate (2,3-dihydroxy-3-methylvalerate) into 2-oxo-3-methylpentanoate (2-oxo-3-methylvalerate) and of (2R)-2,3-dihydroxy-3-methylbutanoate (2,3-dihydroxyisovalerate) into 2-oxo-3-methylbutanoate (2-oxoisovalerate), the penultimate precursor to L-isoleucine and L-valine, respectively. The chain is Dihydroxy-acid dehydratase from Dinoroseobacter shibae (strain DSM 16493 / NCIMB 14021 / DFL 12).